The following is a 376-amino-acid chain: Methylthioribose-1-phosphate isomerase (376 aa).

The Proton donor role is filled by Asp256.

It belongs to the eIF-2B alpha/beta/delta subunits family. MtnA subfamily.

It localises to the cytoplasm. The protein resides in the nucleus. The catalysed reaction is 5-(methylsulfanyl)-alpha-D-ribose 1-phosphate = 5-(methylsulfanyl)-D-ribulose 1-phosphate. It participates in amino-acid biosynthesis; L-methionine biosynthesis via salvage pathway; L-methionine from S-methyl-5-thio-alpha-D-ribose 1-phosphate: step 1/6. Functionally, catalyzes the interconversion of methylthioribose-1-phosphate (MTR-1-P) into methylthioribulose-1-phosphate (MTRu-1-P). This chain is Methylthioribose-1-phosphate isomerase, found in Vitis vinifera (Grape).